Consider the following 312-residue polypeptide: Dihydroorotate dehydrogenase B (NAD(+)), catalytic subunit (312 aa).

FMN is bound by residues Ser23 and 47–48 (KA). Substrate is bound by residues Lys47 and 71–75 (NAIGL). 2 residues coordinate FMN: Asn103 and Asn131. Asn131 is a binding site for substrate. Cys134 (nucleophile) is an active-site residue. FMN is bound by residues Lys171 and Ile197. Residue 198 to 199 (NT) coordinates substrate. Residues Gly223, 249–250 (GG), and 271–272 (GT) contribute to the FMN site.

Belongs to the dihydroorotate dehydrogenase family. Type 1 subfamily. As to quaternary structure, heterotetramer of 2 PyrK and 2 PyrD type B subunits. FMN serves as cofactor.

The protein localises to the cytoplasm. The enzyme catalyses (S)-dihydroorotate + NAD(+) = orotate + NADH + H(+). It participates in pyrimidine metabolism; UMP biosynthesis via de novo pathway; orotate from (S)-dihydroorotate (NAD(+) route): step 1/1. Catalyzes the conversion of dihydroorotate to orotate with NAD(+) as electron acceptor. This is Dihydroorotate dehydrogenase B (NAD(+)), catalytic subunit (pyrDB) from Streptococcus pneumoniae serotype 4 (strain ATCC BAA-334 / TIGR4).